The primary structure comprises 614 residues: Chaperone protein DnaK (614 aa).

At T175 the chain carries Phosphothreonine; by autocatalysis. The tract at residues 577 to 614 (QAGGAEGAADPNAAAGGAQSAPHDDNVVDADFKVDEDK) is disordered. Residues 583–597 (GAADPNAAAGGAQSA) show a composition bias toward low complexity. Basic and acidic residues predominate over residues 598 to 614 (PHDDNVVDADFKVDEDK).

The protein belongs to the heat shock protein 70 family.

Functionally, acts as a chaperone. The protein is Chaperone protein DnaK of Clostridium beijerinckii (strain ATCC 51743 / NCIMB 8052) (Clostridium acetobutylicum).